Consider the following 82-residue polypeptide: M-zodatoxin-Lt3a (82 aa).

The first 22 residues, methionine 1 to glycine 22, serve as a signal peptide directing secretion. Positions tyrosine 23–arginine 61 are excised as a propeptide. The short motif at glutamate 58–arginine 61 is the Processing quadruplet motif element. Alanine 81 carries the alanine amide modification.

It belongs to the cationic peptide 03 (latarcin) family. 03 subfamily. Post-translationally, cleavage of the propeptide depends on the processing quadruplet motif (XXXR, with at least one of X being E). Expressed by the venom gland.

It is found in the secreted. Its subcellular location is the target cell membrane. Functionally, it has antimicrobial activity against Gram-positive bacteria (A.globiformis VKM Ac-1112 (MIC=0.3 uM), and B.subtilis VKM B-501 (MIC=1.2 uM)), Gram-negative bacteria (E.coli DH5-alpha (MIC=2.5 uM), E.coli MH1 (MIC=6.0 uM), and P.aeruginosa PAO1 (MIC&gt;40 uM)), and yeasts (P.pastoris GS115 (MIC=20 uM), and S.cerevisiae Y190 (MIC=20 uM)). Causes paralysis, but is not lethal when injected into insect (M.domestica) larvae. A second study reports antibacterial activity against E.coli (MIC=100 uM) and S.aureus (MIC=84 uM). Furthermore, increases efficacy of antibiotics (chloramphenicol, streptomycin, kanamycin, novobiocin) when tested against E.coli, probably by facilitating their incorporation into the bacteria. This chain is M-zodatoxin-Lt3a, found in Lachesana tarabaevi (Spider).